The following is an 88-amino-acid chain: Putative sulfur carrier protein AF_0554 (88 aa).

The active-site Cysteine persulfide intermediate is the cysteine 26.

This sequence belongs to the sulfur carrier protein TusA family.

The chain is Putative sulfur carrier protein AF_0554 from Archaeoglobus fulgidus (strain ATCC 49558 / DSM 4304 / JCM 9628 / NBRC 100126 / VC-16).